The chain runs to 245 residues: Fibroblast growth factor-binding protein 3 (245 aa).

The signal sequence occupies residues 1–28; the sequence is MSPPRPRASLSPLTLLLLLGGCLLSAAG. The tract at residues 33–52 is disordered; sequence AAGREVTRASRPTVGSSGRF. 2 disulfides stabilise this stretch: Cys-60/Cys-81 and Cys-91/Cys-125. Positions 136–216 are disordered; the sequence is CARKTAGSDL…PAAAGFQPNG (81 aa). The segment covering 170–180 has biased composition (low complexity); sequence RSRQSVRSPSS. Cys-228 and Cys-236 are oxidised to a cystine.

It belongs to the fibroblast growth factor-binding protein family. Interacts with FGF2. In terms of tissue distribution, in the adult, highly expressed in brain with lower levels in ovary. In the embryo, highest levels are found in the brain and spinal cord at 14 dpc and expression is almost completely restricted to the brain by 18 dpc. In the adult and postnatal brain, highly expressed in the orbitofrontal cortex where it is concentrated primarily in differentiated neurons.

The protein localises to the secreted. In terms of biological role, heparin-binding protein which binds to FGF2, prevents binding of FGF2 to heparin and probably inhibits immobilization of FGF2 on extracellular matrix glycosaminoglycans, allowing its release and subsequent activation of FGFR signaling which leads to increased vascular permeability. In Mus musculus (Mouse), this protein is Fibroblast growth factor-binding protein 3 (Fgfbp3).